A 393-amino-acid polypeptide reads, in one-letter code: MTVPTTRKDLMIVNMGPQHPSMHGVLRLVVTLDGEDVIDCEPILGYLHRGMEKIAENRTIIQYLPYVTRWDYLATMFTEAITVNGPEQLGNIQVPKRASYIRVIMLELSRIASHLLWLGPFMADIGAQTPFFYIFRERELIYDLFESATGMRMMHNYFRIGGVAADLPYGWIDKCLDFCDYFLTGVTEYQKLITRNPIFLERVEGVGIIGGEEAINWGLSGPMLRASGIQWDLRKVDHYECYDEFDWEVQWQKEGDSLARYLVRISEMTESIKILQQALEGIPGGPYENLEVRRFDRAKDSEWNDFDYRFISKKPSPTFELSKQELYVRVEAPKGELGIFLVGDKSVFPWRWKIRPPGFINLQILPQLVKRMKLADIMTILGSIDIIMGEVDR.

This sequence belongs to the complex I 49 kDa subunit family. NDH is composed of at least 16 different subunits, 5 of which are encoded in the nucleus.

The protein resides in the plastid. The protein localises to the chloroplast thylakoid membrane. It catalyses the reaction a plastoquinone + NADH + (n+1) H(+)(in) = a plastoquinol + NAD(+) + n H(+)(out). It carries out the reaction a plastoquinone + NADPH + (n+1) H(+)(in) = a plastoquinol + NADP(+) + n H(+)(out). Functionally, NDH shuttles electrons from NAD(P)H:plastoquinone, via FMN and iron-sulfur (Fe-S) centers, to quinones in the photosynthetic chain and possibly in a chloroplast respiratory chain. The immediate electron acceptor for the enzyme in this species is believed to be plastoquinone. Couples the redox reaction to proton translocation, and thus conserves the redox energy in a proton gradient. The chain is NAD(P)H-quinone oxidoreductase subunit H, chloroplastic from Ranunculus macranthus (Large buttercup).